The sequence spans 325 residues: Alkanal monooxygenase beta chain (325 aa).

Belongs to the bacterial luciferase oxidoreductase family. As to quaternary structure, heterodimer of an alpha and a beta chain.

It carries out the reaction a long-chain fatty aldehyde + FMNH2 + O2 = a long-chain fatty acid + hnu + FMN + H2O + 2 H(+). Its function is as follows. Light-emitting reaction in luminous bacteria. The specific role of the beta subunit is unknown, but it is absolutely required for bioluminescence activity. This Photobacterium leiognathi protein is Alkanal monooxygenase beta chain (luxB).